Consider the following 170-residue polypeptide: uncharacterized protein (170 aa).

The next 5 membrane-spanning stretches (helical) occupy residues 21–41 (NISL…AAVL), 55–75 (AYTS…TLLL), 86–106 (TGIA…YWLW), 117–137 (ISGV…VSLL), and 143–163 (FSAA…TLLP). An EamA domain is found at 35–161 (IIFAAVLRWT…IMLATLGSTL (127 aa)).

It belongs to the EamA transporter family.

The protein localises to the cell membrane. This is an uncharacterized protein from Haemophilus influenzae (strain ATCC 51907 / DSM 11121 / KW20 / Rd).